The sequence spans 150 residues: Protein A151R (150 aa).

The protein belongs to the asfivirus A151R family. As to quaternary structure, monomer. Homodimer. Interacts with protein B119L. Interacts with membrane protein E248R. Zn(2+) is required as a cofactor.

May participate in a redox cascade for the formation of disulfide bonds in viral proteins. This chain is Protein A151R, found in African swine fever virus (isolate Tick/Malawi/Lil 20-1/1983) (ASFV).